A 644-amino-acid chain; its full sequence is 1-deoxy-D-xylulose-5-phosphate synthase (644 aa).

Thiamine diphosphate is bound by residues H72 and 113–115 (GHA). A Mg(2+)-binding site is contributed by D144. Thiamine diphosphate is bound by residues 145-146 (GA), N174, Y287, and E370. N174 is a Mg(2+) binding site.

This sequence belongs to the transketolase family. DXPS subfamily. Homodimer. Mg(2+) is required as a cofactor. Thiamine diphosphate serves as cofactor.

The catalysed reaction is D-glyceraldehyde 3-phosphate + pyruvate + H(+) = 1-deoxy-D-xylulose 5-phosphate + CO2. It functions in the pathway metabolic intermediate biosynthesis; 1-deoxy-D-xylulose 5-phosphate biosynthesis; 1-deoxy-D-xylulose 5-phosphate from D-glyceraldehyde 3-phosphate and pyruvate: step 1/1. In terms of biological role, catalyzes the acyloin condensation reaction between C atoms 2 and 3 of pyruvate and glyceraldehyde 3-phosphate to yield 1-deoxy-D-xylulose-5-phosphate (DXP). This chain is 1-deoxy-D-xylulose-5-phosphate synthase, found in Prochlorococcus marinus (strain MIT 9303).